A 322-amino-acid polypeptide reads, in one-letter code: Putative HTH-type transcriptional regulatory protein rrnAC2519 (322 aa).

The 58-residue stretch at 132-189 (LADVREDRDWSLGRLAKELGVSRRTVSKYEDGMDASVEVAAELEDLFDAPLTSPVSVL) folds into the HTH cro/C1-type domain. Residues 143 to 162 (LGRLAKELGVSRRTVSKYED) constitute a DNA-binding region (H-T-H motif).

This is Putative HTH-type transcriptional regulatory protein rrnAC2519 from Haloarcula marismortui (strain ATCC 43049 / DSM 3752 / JCM 8966 / VKM B-1809) (Halobacterium marismortui).